The following is a 969-amino-acid chain: Isoleucine--tRNA ligase (969 aa).

The 'HIGH' region signature appears at 68-78 (PYANGALHMGH). Position 585 (Glu-585) interacts with L-isoleucyl-5'-AMP. The 'KMSKS' region motif lies at 626 to 630 (KMSKS). Residue Lys-629 participates in ATP binding. Positions 939, 942, 959, and 962 each coordinate Zn(2+).

This sequence belongs to the class-I aminoacyl-tRNA synthetase family. IleS type 1 subfamily. In terms of assembly, monomer. Zn(2+) is required as a cofactor.

It localises to the cytoplasm. The catalysed reaction is tRNA(Ile) + L-isoleucine + ATP = L-isoleucyl-tRNA(Ile) + AMP + diphosphate. Catalyzes the attachment of isoleucine to tRNA(Ile). As IleRS can inadvertently accommodate and process structurally similar amino acids such as valine, to avoid such errors it has two additional distinct tRNA(Ile)-dependent editing activities. One activity is designated as 'pretransfer' editing and involves the hydrolysis of activated Val-AMP. The other activity is designated 'posttransfer' editing and involves deacylation of mischarged Val-tRNA(Ile). The polypeptide is Isoleucine--tRNA ligase (Prochlorococcus marinus (strain MIT 9211)).